A 203-amino-acid polypeptide reads, in one-letter code: Holliday junction branch migration complex subunit RuvA (203 aa).

The segment at 1–64 (MIGRLRGIII…EDAQLLYGFN (64 aa)) is domain I. Residues 65–142 (NKQERTLFKE…KGLHGDLFTP (78 aa)) form a domain II region. The interval 143–154 (AADLVLTSPASP) is flexible linker. A domain III region spans residues 155–203 (ATNDAEQEAVAALVALGYKPQEASRMVSKIARPDASSETLIREALRAAL).

It belongs to the RuvA family. As to quaternary structure, homotetramer. Forms an RuvA(8)-RuvB(12)-Holliday junction (HJ) complex. HJ DNA is sandwiched between 2 RuvA tetramers; dsDNA enters through RuvA and exits via RuvB. An RuvB hexamer assembles on each DNA strand where it exits the tetramer. Each RuvB hexamer is contacted by two RuvA subunits (via domain III) on 2 adjacent RuvB subunits; this complex drives branch migration. In the full resolvosome a probable DNA-RuvA(4)-RuvB(12)-RuvC(2) complex forms which resolves the HJ.

Its subcellular location is the cytoplasm. The RuvA-RuvB-RuvC complex processes Holliday junction (HJ) DNA during genetic recombination and DNA repair, while the RuvA-RuvB complex plays an important role in the rescue of blocked DNA replication forks via replication fork reversal (RFR). RuvA specifically binds to HJ cruciform DNA, conferring on it an open structure. The RuvB hexamer acts as an ATP-dependent pump, pulling dsDNA into and through the RuvAB complex. HJ branch migration allows RuvC to scan DNA until it finds its consensus sequence, where it cleaves and resolves the cruciform DNA. This Escherichia coli O9:H4 (strain HS) protein is Holliday junction branch migration complex subunit RuvA.